The primary structure comprises 125 residues: Putative superoxide reductase (125 aa).

The Fe cation site is built by glutamate 12, histidine 14, histidine 40, histidine 46, cysteine 110, and histidine 113.

Belongs to the desulfoferrodoxin family. It depends on Fe cation as a cofactor.

The enzyme catalyses reduced [rubredoxin] + superoxide + 2 H(+) = oxidized [rubredoxin] + H2O2. Uses electrons from reduced NADP, by way of rubredoxin and an oxidoreductase, to catalyze the reduction of superoxide to hydrogen peroxide. The chain is Putative superoxide reductase from Archaeoglobus fulgidus (strain ATCC 49558 / DSM 4304 / JCM 9628 / NBRC 100126 / VC-16).